A 395-amino-acid polypeptide reads, in one-letter code: Elongation factor Tu (395 aa).

Residues 10–204 (KPHVNIGTIG…TVDSYIPEPK (195 aa)) form the tr-type G domain. Positions 19–26 (GHVDHGKT) are G1. Position 19–26 (19–26 (GHVDHGKT)) interacts with GTP. Mg(2+) is bound at residue Thr-26. The interval 60–64 (GITIN) is G2. A G3 region spans residues 81–84 (DAPG). GTP contacts are provided by residues 81–85 (DAPGH) and 136–139 (NKTD). The interval 136–139 (NKTD) is G4. Positions 174–176 (SAL) are G5.

The protein belongs to the TRAFAC class translation factor GTPase superfamily. Classic translation factor GTPase family. EF-Tu/EF-1A subfamily. Monomer.

Its subcellular location is the cytoplasm. It carries out the reaction GTP + H2O = GDP + phosphate + H(+). Its function is as follows. GTP hydrolase that promotes the GTP-dependent binding of aminoacyl-tRNA to the A-site of ribosomes during protein biosynthesis. The protein is Elongation factor Tu of Leuconostoc citreum (strain KM20).